Consider the following 301-residue polypeptide: Lycopene elongase/hydratase (301 aa).

The interval 1–20 is disordered; the sequence is MSADMAAQSESGEGGDDGRA. 9 consecutive transmembrane segments (helical) span residues 39 to 59, 61 to 81, 110 to 130, 133 to 153, 160 to 180, 186 to 206, 229 to 249, 252 to 272, and 276 to 296; these read FWLY…SALA, LFGL…NVFL, PVNT…FAVA, VAWP…APPF, LLDS…YAAV, PMLA…FSAI, TYWY…AVDL, GALL…GVDV, and YWWY…GALW.

Belongs to the UbiA prenyltransferase family.

The protein resides in the cell membrane. It catalyses the reaction all-trans-lycopene + dimethylallyl diphosphate + H2O = dihydroisopentenyldehydrorhodopin + diphosphate. The enzyme catalyses isopentenyldehydrorhodopin + dimethylallyl diphosphate + H2O = dihydrobisanhydrobacterioruberin + diphosphate. It functions in the pathway carotenoid biosynthesis. Its function is as follows. Involved in the biosynthesis of the acyclic C50 carotenoid bacterioruberin (BR). Acts as a bifunctional elongase/hydratase that catalyzes the elongation of lycopene by attaching a C(5) isoprene unit at C-2, as well as the hydroxylation of the previous end of the molecule. The enzyme acts at both ends of the substrate, and catalyzes the conversion of lycopene to the C(45) intermediate dihydroisopentenyldehydrorhodopin (DH-IDR) and the conversion of isopentenyldehydrorhodopin (IDR) to the C(50) carotenoid dihydrobisanhydrobacterioruberin (DH-BABR). Can also catalyze the conversion of lycopene to tetrahydrobisanhydrobacterioruberin (TH-BABR). The polypeptide is Lycopene elongase/hydratase (Haloferax volcanii (strain ATCC 29605 / DSM 3757 / JCM 8879 / NBRC 14742 / NCIMB 2012 / VKM B-1768 / DS2) (Halobacterium volcanii)).